Reading from the N-terminus, the 448-residue chain is Asparagine--tRNA ligase (448 aa).

The protein belongs to the class-II aminoacyl-tRNA synthetase family. Homodimer.

It localises to the cytoplasm. The catalysed reaction is tRNA(Asn) + L-asparagine + ATP = L-asparaginyl-tRNA(Asn) + AMP + diphosphate + H(+). In Streptococcus pyogenes serotype M2 (strain MGAS10270), this protein is Asparagine--tRNA ligase.